The following is a 494-amino-acid chain: UPF0371 protein spr0309 (494 aa).

It belongs to the UPF0371 family.

The polypeptide is UPF0371 protein spr0309 (Streptococcus pneumoniae (strain ATCC BAA-255 / R6)).